Reading from the N-terminus, the 199-residue chain is MLNALGVICSGRLVQTDFQQISEVQYLINIPEADNVNHVVVFLTGTTPFAEGMAGAVYFSWPDPNAPPTWQFLGYISNSKPSAIFKISQLKKLDEMSNNSAVNVFGANLPISHIAQIGVSIEPESNLMQQTPATTTTDTYYQFGQKMVENFFNFVSSFSVTQSQMMPNPNEAFVPLSTVQTWFTNFQRRLQQNPSFWKS.

The protein belongs to the OPI10 family.

The polypeptide is Protein OPI10 homolog (Aedes aegypti (Yellowfever mosquito)).